The chain runs to 349 residues: Aquaporin-4 (349 aa).

2 helical membrane-spanning segments follow: residues 92-112 (LSESLAMFFFMSLLLGCAATA) and 125-147 (AFYHGFSIIFAIYVAGGISGGLL). Positions 148-150 (NPA) match the NPA 1 motif. The helical transmembrane segment at 167 to 187 (LIYMSAQYFGAFIASAVVYLI) threads the bilayer. 2 N-linked (GlcNAc...) asparagine glycosylation sites follow: Asn-194 and Asn-207. 2 consecutive transmembrane segments (helical) span residues 225-245 (GAIFNQIFCTMLLTIGFLSIC) and 256-276 (MFPFAVGMLIMTVFLAFSYSA). Positions 281 to 283 (NPA) match the NPA 2 motif. A helical membrane pass occupies residues 314–334 (WLFPYVGALLGGVIYEIFIGI).

Belongs to the MIP/aquaporin (TC 1.A.8) family.

Its subcellular location is the cell membrane. In terms of biological role, aquaglyceroporin that may modulate the water content and osmolytes during anhydrobiosis. This is Aquaporin-4 from Milnesium tardigradum (Water bear).